A 201-amino-acid polypeptide reads, in one-letter code: Small ribosomal subunit protein uS4c (201 aa).

Residues 89-149 (MRLDNILFRL…DKPKSGALIK (61 aa)) enclose the S4 RNA-binding domain.

This sequence belongs to the universal ribosomal protein uS4 family. As to quaternary structure, part of the 30S ribosomal subunit. Contacts protein S5. The interaction surface between S4 and S5 is involved in control of translational fidelity.

Its subcellular location is the plastid. One of the primary rRNA binding proteins, it binds directly to 16S rRNA where it nucleates assembly of the body of the 30S subunit. Functionally, with S5 and S12 plays an important role in translational accuracy. The sequence is that of Small ribosomal subunit protein uS4c (rps4) from Cuscuta exaltata (Tall dodder).